The chain runs to 250 residues: Galectin-3 (250 aa).

The segment at 1–60 is disordered; that stretch reads MADNFSLHDALSGSGNPNPQGWPGAWGNQPAGAGGYPGASYPGAYPGQAPPGAYPGQAPP. A2 is modified (N-acetylalanine). 2 positions are modified to phosphoserine: S6 and S12. 3 consecutive repeat copies span residues 36 to 44, 45 to 53, and 54 to 62. Positions 36–109 are 8 X 9 AA tandem repeats of Y-P-G-X(3)-P-G-A; sequence YPGASYPGAY…AYPATGPYGA (74 aa). The segment covering 38–47 has biased composition (low complexity); sequence GASYPGAYPG. Residues 48–60 show a composition bias toward pro residues; that stretch reads QAPPGAYPGQAPP. The stretch at 63–69 is one 4; approximate repeat; that stretch reads YPGAPGA. The stretch at 70-78 is repeat 5; the sequence is YPGAPAPGV. A 6; approximate repeat occupies 79–88; it reads YPGPPSGPGA. The 7; approximate repeat unit spans residues 89-100; it reads YPSSGQPSATGA. An 8; approximate repeat occupies 101–109; it reads YPATGPYGA. The Galectin domain occupies 118 to 248; sequence YNLPLPGGVV…DIDLTSASYT (131 aa). Residue 181 to 187 participates in a beta-D-galactoside binding; that stretch reads WGREERQ. Residue S188 is modified to Phosphoserine. A Nuclear export signal motif is present at residues 226-241; sequence KKLNEISKLGISGDID.

Probably forms homo- or heterodimers. Interacts with DMBT1. Interacts with CD6 and ALCAM. Forms a complex with the ITGA3, ITGB1 and CSPG4. Interacts with LGALS3BP, LYPD3, ZFTRAF1 and UACA. Interacts with TRIM16; this interaction mediates autophagy of damage endomembranes. Interacts with cargo receptor TMED10; the interaction mediates the translocation from the cytoplasm into the ERGIC (endoplasmic reticulum-Golgi intermediate compartment) and thereby secretion. A major expression is found in the colonic epithelium. It is also abundant in the activated macrophages. Expressed in fetal membranes.

It is found in the cytoplasm. The protein resides in the nucleus. The protein localises to the secreted. Its function is as follows. Galactose-specific lectin which binds IgE. May mediate with the alpha-3, beta-1 integrin the stimulation by CSPG4 of endothelial cells migration. Together with DMBT1, required for terminal differentiation of columnar epithelial cells during early embryogenesis. In the nucleus: acts as a pre-mRNA splicing factor. Involved in acute inflammatory responses including neutrophil activation and adhesion, chemoattraction of monocytes macrophages, opsonization of apoptotic neutrophils, and activation of mast cells. Together with TRIM16, coordinates the recognition of membrane damage with mobilization of the core autophagy regulators ATG16L1 and BECN1 in response to damaged endomembranes. The sequence is that of Galectin-3 from Homo sapiens (Human).